A 443-amino-acid polypeptide reads, in one-letter code: Cell division protein FtsA (443 aa).

Belongs to the FtsA/MreB family. In terms of assembly, self-interacts. Interacts with FtsZ.

Its subcellular location is the cell inner membrane. In terms of biological role, cell division protein that is involved in the assembly of the Z ring. May serve as a membrane anchor for the Z ring. This is Cell division protein FtsA from Agrobacterium fabrum (strain C58 / ATCC 33970) (Agrobacterium tumefaciens (strain C58)).